Here is a 527-residue protein sequence, read N- to C-terminus: Protein PLASTID TRANSCRIPTIONALLY ACTIVE 12, chloroplastic (527 aa).

A chloroplast-targeting transit peptide spans 1–30; it reads MASISTTTWLYRGQVCTDSGKSSNCIVQRR. Positions 1–115 are PHYA-interacting region 1 (PIR1); the sequence is MASISTTTWL…ASIPGEDYWP (115 aa). The tract at residues 89 to 188 is disordered; that stretch reads SYMDSTSGKL…NDSSDGFVTY (100 aa). The span at 163-181 shows a compositional bias: acidic residues; sequence TNDEVSDSEDSSEEEENDS. 2 short sequence motifs (nuclear localization signal) span residues 204–211 and 235–242; these read DKKLGRPH and WRKPEKEQ. Positions 252-352 are PHYA-interacting region 2 (PIR2); that stretch reads DVETVFLKAM…EMFSHQTDRE (101 aa). Over residues 458–471 the composition is skewed to acidic residues; sequence GENDDDEDDADVEK. Positions 458-527 are disordered; the sequence is GENDDDEDDA…LMDFEEETDP (70 aa). Basic and acidic residues predominate over residues 485–504; it reads ETPELRTAKPKPKKEGRMSL. Residues 506–527 are compositionally biased toward acidic residues; that stretch reads EAVDDAENLTDFLMDFEEETDP. The Required and sufficient for transcriptional transactivation activity and to trigger PIF proteins degradation motif lies at 512–520; sequence ENLTDFLMD.

As to quaternary structure, component of the transcriptionally active chromosome (TAC) complexes. Interacts with PTAC14 and PTAC7. Binds directly to PTAC6/PAP8 in the nucleus. Interacts with MED14. Binds to SL1/MTERF3. Binds to photoactivated phytochromes (e.g. PHYA and PHYB) via their photosensory domains; these interactions stimulate its light-mediated accumulation. Associates, via its N-terminal region, with phytochrome-interacting factors (PIFs) including PIF1, PIF3, PIF4, PIF5, PIF6, BHLH72/PIF7, UNE10/PIF8 and PIL1. Binds to RAD4. Associates with MRL7/RCB. In terms of tissue distribution, mostly expressed in cotyledons, leaves, stems and flowers, but barely in roots.

Its subcellular location is the plastid. The protein resides in the chloroplast. The protein localises to the nucleus. Its function is as follows. Involved in plastid gene expression. Acidic transcriptional coactivator necessary for the transactivation of many PIFs target genes (class B genes), particularly during the regulation of hypocotyl growth. Plays dual opposite roles in regulating hypocotyl growth, preventing it in red and far-red conditions, but promoting it otherwise. Required in the nucleus for the initiation of photomorphogenesis mediated by phytochromes (PHYs) (e.g. PHYA and PHYB) by mediating PHYs localization to photobodies, especially in response to red and far-red light, and implicating phytochrome nuclear bodies as sites of proteolysis for PHYs and PIFs proteins (e.g. PIF1 and PIF3). Acts downstream of PHYs and upstream of DET1. Involved in UV tolerance in both roots and hypocotyls, specifically in dark conditions. Element of a PIF4/HMR/MED14-dependent thermoresponsive process; acts as a PIF4 transcriptional coactivator to trigger the thermoresponsive growth-relevant genes (e.g. mainly involved in biosynthesis and signaling of the phytohormone auxin) and promote warm-temperature-dependent (e.g. 27 degrees Celsius) PIF4 and MED14 stabilization and accumulation, being more prominently involved in long days (LD) and continuous red light (Rc) than in short days (SD), thus modulating warm temperature elicitation of MED14-dependent thermomorphogenesis (e.g. hypocotyl elongation). In Arabidopsis thaliana (Mouse-ear cress), this protein is Protein PLASTID TRANSCRIPTIONALLY ACTIVE 12, chloroplastic.